The primary structure comprises 452 residues: Tubulin alpha-2/alpha-4 chain (452 aa).

Gln11 is a GTP binding site. The residue at position 40 (Lys40) is an N6-acetyllysine. Residues Glu71, Ser140, Gly144, Thr145, Thr179, Asn206, and Asn228 each contribute to the GTP site. Glu71 serves as a coordination point for Mg(2+). Glu254 is an active-site residue. The segment at 432 to 452 is disordered; the sequence is YEEVGVDSVEGEGEEEGGEEY.

This sequence belongs to the tubulin family. In terms of assembly, dimer of alpha and beta chains. A typical microtubule is a hollow water-filled tube with an outer diameter of 25 nm and an inner diameter of 15 nM. Alpha-beta heterodimers associate head-to-tail to form protofilaments running lengthwise along the microtubule wall with the beta-tubulin subunit facing the microtubule plus end conferring a structural polarity. Microtubules usually have 13 protofilaments but different protofilament numbers can be found in some organisms and specialized cells. Mg(2+) is required as a cofactor. In terms of processing, undergoes a tyrosination/detyrosination cycle, the cyclic removal and re-addition of a C-terminal tyrosine residue by the enzymes tubulin tyrosine carboxypeptidase (TTCP) and tubulin tyrosine ligase (TTL), respectively. Acetylation of alpha chains at Lys-40 stabilizes microtubules and affects affinity and processivity of microtubule motors. This modification has a role in multiple cellular functions, ranging from cell motility, cell cycle progression or cell differentiation to intracellular trafficking and signaling.

Its subcellular location is the cytoplasm. It localises to the cytoskeleton. The enzyme catalyses GTP + H2O = GDP + phosphate + H(+). Its function is as follows. Tubulin is the major constituent of microtubules, a cylinder consisting of laterally associated linear protofilaments composed of alpha- and beta-tubulin heterodimers. Microtubules grow by the addition of GTP-tubulin dimers to the microtubule end, where a stabilizing cap forms. Below the cap, tubulin dimers are in GDP-bound state, owing to GTPase activity of alpha-tubulin. The polypeptide is Tubulin alpha-2/alpha-4 chain (TUB2) (Patella vulgata (Common limpet)).